Consider the following 188-residue polypeptide: Protein GrpE (188 aa).

Residues 1–24 (MSDENKPGEAAELDAGVAPEAQPE) form a disordered region.

The protein belongs to the GrpE family. In terms of assembly, homodimer.

The protein localises to the cytoplasm. Its function is as follows. Participates actively in the response to hyperosmotic and heat shock by preventing the aggregation of stress-denatured proteins, in association with DnaK and GrpE. It is the nucleotide exchange factor for DnaK and may function as a thermosensor. Unfolded proteins bind initially to DnaJ; upon interaction with the DnaJ-bound protein, DnaK hydrolyzes its bound ATP, resulting in the formation of a stable complex. GrpE releases ADP from DnaK; ATP binding to DnaK triggers the release of the substrate protein, thus completing the reaction cycle. Several rounds of ATP-dependent interactions between DnaJ, DnaK and GrpE are required for fully efficient folding. The chain is Protein GrpE from Hyphomonas neptunium (strain ATCC 15444).